Reading from the N-terminus, the 172-residue chain is MRNLILVGPMGAGKSTIGRLLAKELRLPFKDSDKEIELRTGANIPWIFDKEGEPGFRDREQAMIAELCAFDGVVLATGGGAVMRDANRKALHEGGRVVYLHASVEQQVGRTSRDRNRPLLRTANPEKTLRDLLAIRDPLYREIADLVVETDERPPRMVVLDILDRLAQLPPR.

11–16 (GAGKST) serves as a coordination point for ATP. Mg(2+) is bound at residue serine 15. The substrate site is built by aspartate 33, arginine 57, and glycine 79. Arginine 117 serves as a coordination point for ATP. Arginine 136 contributes to the substrate binding site. Residue arginine 153 participates in ATP binding.

This sequence belongs to the shikimate kinase family. Monomer. Requires Mg(2+) as cofactor.

It is found in the cytoplasm. It carries out the reaction shikimate + ATP = 3-phosphoshikimate + ADP + H(+). It functions in the pathway metabolic intermediate biosynthesis; chorismate biosynthesis; chorismate from D-erythrose 4-phosphate and phosphoenolpyruvate: step 5/7. Functionally, catalyzes the specific phosphorylation of the 3-hydroxyl group of shikimic acid using ATP as a cosubstrate. The protein is Shikimate kinase of Pseudomonas fluorescens (strain Pf0-1).